The primary structure comprises 226 residues: PKHD-type hydroxylase LHK_00496 (226 aa).

The region spanning 78–178 (RFFPPLFNRY…RVASFMWIQS (101 aa)) is the Fe2OG dioxygenase domain. Residues His-96, Asp-98, and His-159 each coordinate Fe cation. Arg-169 serves as a coordination point for 2-oxoglutarate.

Fe(2+) serves as cofactor. The cofactor is L-ascorbate.

The polypeptide is PKHD-type hydroxylase LHK_00496 (Laribacter hongkongensis (strain HLHK9)).